A 501-amino-acid chain; its full sequence is ATP synthase subunit alpha (501 aa).

Gly169–Thr176 is a binding site for ATP.

The protein belongs to the ATPase alpha/beta chains family. As to quaternary structure, F-type ATPases have 2 components, CF(1) - the catalytic core - and CF(0) - the membrane proton channel. CF(1) has five subunits: alpha(3), beta(3), gamma(1), delta(1), epsilon(1). CF(0) has three main subunits: a(1), b(2) and c(9-12). The alpha and beta chains form an alternating ring which encloses part of the gamma chain. CF(1) is attached to CF(0) by a central stalk formed by the gamma and epsilon chains, while a peripheral stalk is formed by the delta and b chains.

The protein resides in the cell membrane. It catalyses the reaction ATP + H2O + 4 H(+)(in) = ADP + phosphate + 5 H(+)(out). Its function is as follows. Produces ATP from ADP in the presence of a proton gradient across the membrane. The alpha chain is a regulatory subunit. The protein is ATP synthase subunit alpha of Streptococcus mutans serotype c (strain ATCC 700610 / UA159).